The sequence spans 74 residues: Putative membrane protein insertion efficiency factor (74 aa).

Belongs to the UPF0161 family.

The protein localises to the cell inner membrane. Its function is as follows. Could be involved in insertion of integral membrane proteins into the membrane. This Endomicrobium trichonymphae protein is Putative membrane protein insertion efficiency factor.